Consider the following 877-residue polypeptide: Alanine--tRNA ligase (877 aa).

4 residues coordinate Zn(2+): His-566, His-570, Cys-668, and His-672.

The protein belongs to the class-II aminoacyl-tRNA synthetase family. The cofactor is Zn(2+).

It is found in the cytoplasm. The catalysed reaction is tRNA(Ala) + L-alanine + ATP = L-alanyl-tRNA(Ala) + AMP + diphosphate. Catalyzes the attachment of alanine to tRNA(Ala) in a two-step reaction: alanine is first activated by ATP to form Ala-AMP and then transferred to the acceptor end of tRNA(Ala). Also edits incorrectly charged Ser-tRNA(Ala) and Gly-tRNA(Ala) via its editing domain. In Staphylococcus aureus (strain USA300 / TCH1516), this protein is Alanine--tRNA ligase.